A 301-amino-acid polypeptide reads, in one-letter code: MEQLVNELIEANVGRVLVDEPLARYTTMKIGGPADILIVPKHVAGIEKTLQLVKKYKTKWTVIGRGSNLLVSDLGIEGVVIRLGEGLEHLEVEKHRVRVGGGYPLIKLSTLLSRQGLAGLEFASGIPGSVGGAVYMNAGAHKSDISNILSKALILFEDGTIDWLTHGEMEFSYRTSVLQTKRPGIVLEAEFQLQIGERERIVSVMQKNKDYRRETQPWNHPCAGSVFRNPTPYFAGDLIEKAGLRGYQIGGAQISEMHGNFIINTGGASAQDVLSLIALIKQTIKDKFGVAMHTEVEIIGR.

An FAD-binding PCMH-type domain is found at 29-196; the sequence is KIGGPADILI…LEAEFQLQIG (168 aa). The active site involves Arg-174. Residue Ser-225 is the Proton donor of the active site. Residue Glu-295 is part of the active site.

This sequence belongs to the MurB family. FAD is required as a cofactor.

It is found in the cytoplasm. It catalyses the reaction UDP-N-acetyl-alpha-D-muramate + NADP(+) = UDP-N-acetyl-3-O-(1-carboxyvinyl)-alpha-D-glucosamine + NADPH + H(+). The protein operates within cell wall biogenesis; peptidoglycan biosynthesis. Its function is as follows. Cell wall formation. This chain is UDP-N-acetylenolpyruvoylglucosamine reductase 1, found in Bacillus cereus (strain ZK / E33L).